We begin with the raw amino-acid sequence, 365 residues long: 3-dehydroquinate synthase (365 aa).

NAD(+)-binding positions include 106–110 (GVIGD), 130–131 (TT), K142, K151, and 169–172 (FFAT). The Zn(2+) site is built by E184, H247, and H264.

Belongs to the sugar phosphate cyclases superfamily. Dehydroquinate synthase family. NAD(+) serves as cofactor. It depends on Co(2+) as a cofactor. The cofactor is Zn(2+).

The protein localises to the cytoplasm. The catalysed reaction is 7-phospho-2-dehydro-3-deoxy-D-arabino-heptonate = 3-dehydroquinate + phosphate. It participates in metabolic intermediate biosynthesis; chorismate biosynthesis; chorismate from D-erythrose 4-phosphate and phosphoenolpyruvate: step 2/7. Its function is as follows. Catalyzes the conversion of 3-deoxy-D-arabino-heptulosonate 7-phosphate (DAHP) to dehydroquinate (DHQ). The sequence is that of 3-dehydroquinate synthase from Listeria monocytogenes serovar 1/2a (strain ATCC BAA-679 / EGD-e).